The following is a 557-amino-acid chain: Glucose-6-phosphate isomerase (557 aa).

E361 functions as the Proton donor in the catalytic mechanism. Residues H392 and K520 contribute to the active site.

Belongs to the GPI family.

It localises to the cytoplasm. The enzyme catalyses alpha-D-glucose 6-phosphate = beta-D-fructose 6-phosphate. It functions in the pathway carbohydrate biosynthesis; gluconeogenesis. Its pathway is carbohydrate degradation; glycolysis; D-glyceraldehyde 3-phosphate and glycerone phosphate from D-glucose: step 2/4. In terms of biological role, catalyzes the reversible isomerization of glucose-6-phosphate to fructose-6-phosphate. In Acinetobacter venetianus (strain ATCC 31012 / DSM 23050 / BCRC 14357 / CCUG 45561 / CIP 110063 / KCTC 2702 / LMG 19082 / RAG-1), this protein is Glucose-6-phosphate isomerase.